The sequence spans 212 residues: CRIB domain-containing protein RIC6 (212 aa).

A CRIB domain is found at 34–47 (IGNPTDVKHVAHIG). The interval 51 to 212 (PSANATAPSW…MPQFDNRDDF (162 aa)) is disordered. Residues 53–65 (ANATAPSWMTEFN) show a composition bias toward polar residues. Over residues 106-121 (AASEKGSPTKDKSSDK) the composition is skewed to basic and acidic residues. Residues 192–202 (EYMSETGSVRS) are compositionally biased toward polar residues.

Interacts with ARAC11/ROP1. As to expression, expressed in flowers and pollen.

Its subcellular location is the cell membrane. Its function is as follows. Functions as a downstream effector of Rho-related GTP binding proteins of the 'Rho of Plants' (ROPs) family. Participates in the propagation of ROP GTPase signals in specific cellular responses. Is involved in pollen tube growth regulation through its interaction with ARAC11/ROP1. The sequence is that of CRIB domain-containing protein RIC6 (RIC6) from Arabidopsis thaliana (Mouse-ear cress).